Here is a 406-residue protein sequence, read N- to C-terminus: Glutamyl-tRNA(Gln) amidotransferase subunit D (406 aa).

The Asparaginase/glutaminase domain occupies 68–390 (KSISILATGG…EEFINVFNRN (323 aa)). Residues threonine 78, threonine 152, aspartate 153, and lysine 230 contribute to the active site.

Belongs to the asparaginase 1 family. GatD subfamily. In terms of assembly, heterodimer of GatD and GatE.

It carries out the reaction L-glutamyl-tRNA(Gln) + L-glutamine + ATP + H2O = L-glutaminyl-tRNA(Gln) + L-glutamate + ADP + phosphate + H(+). Its function is as follows. Allows the formation of correctly charged Gln-tRNA(Gln) through the transamidation of misacylated Glu-tRNA(Gln) in organisms which lack glutaminyl-tRNA synthetase. The reaction takes place in the presence of glutamine and ATP through an activated gamma-phospho-Glu-tRNA(Gln). The GatDE system is specific for glutamate and does not act on aspartate. The chain is Glutamyl-tRNA(Gln) amidotransferase subunit D from Thermoplasma volcanium (strain ATCC 51530 / DSM 4299 / JCM 9571 / NBRC 15438 / GSS1).